A 528-amino-acid polypeptide reads, in one-letter code: GTPase Obg (528 aa).

The region spanning 2–159 is the Obg domain; it reads ASFVDRVVLH…SDIVLELKSI (158 aa). Residues 160 to 343 form the OBG-type G domain; the sequence is ADIALVGFPS…LGFAMAEIVQ (184 aa). Residues 166–173, 191–195, 212–215, 295–298, and 324–326 each bind GTP; these read GFPSAGKS, FTTLI, DVPG, NKVD, and SAT. 2 residues coordinate Mg(2+): Ser173 and Thr193. The OCT domain occupies 363–447; that stretch reads PRAVNESGFK…DDGVVFDWEP (85 aa). Residues 471–490 are disordered; the sequence is DRPTRSQKRDEQIERREAKA.

The protein belongs to the TRAFAC class OBG-HflX-like GTPase superfamily. OBG GTPase family. In terms of assembly, monomer. It depends on Mg(2+) as a cofactor.

The protein resides in the cytoplasm. Functionally, an essential GTPase which binds GTP, GDP and possibly (p)ppGpp with moderate affinity, with high nucleotide exchange rates and a fairly low GTP hydrolysis rate. Plays a role in control of the cell cycle, stress response, ribosome biogenesis and in those bacteria that undergo differentiation, in morphogenesis control. The sequence is that of GTPase Obg from Paenarthrobacter aurescens (strain TC1).